Reading from the N-terminus, the 107-residue chain is Glutaredoxin-1 (107 aa).

Alanine 2 carries the post-translational modification N-acetylalanine. The Glutaredoxin domain maps to glutamine 3 to glutamine 106. Lysine 9 is modified (N6-succinyllysine). Cystine bridges form between cysteine 23–cysteine 26 and cysteine 79–cysteine 83.

Belongs to the glutaredoxin family.

It localises to the cytoplasm. In terms of biological role, has a glutathione-disulfide oxidoreductase activity in the presence of NADPH and glutathione reductase. Reduces low molecular weight disulfides and proteins. The sequence is that of Glutaredoxin-1 (Glrx) from Mus musculus (Mouse).